We begin with the raw amino-acid sequence, 158 residues long: MGRFIFVSFGLLVVFLSLSGAKGSCCTNDSLPMNGMCYKIFDEPKTWEDAEMFCRKYKPGCHLASFHRLAESLDIAEYISDYHKRQAEVWIGLLDRKKDFSWEWTDRSCTDYLNWDKNQPDHYKDKEFCVELVSLTGYHRWNDQVCESKNSFLCQCKF.

The signal sequence occupies residues 1-23 (MGRFIFVSFGLLVVFLSLSGAKG). A C-type lectin domain is found at 24-158 (SCCTNDSLPM…KNSFLCQCKF (135 aa)). Intrachain disulfides connect Cys26–Cys37, Cys54–Cys154, Cys61–Cys156, and Cys129–Cys146. Asn28 is a glycosylation site (N-linked (GlcNAc...) (high mannose) asparagine). Gln119, Asp121, Glu127, Asn142, and Asp143 together coordinate Ca(2+). The Galactose-binding motif lies at 119 to 121 (QPD).

It belongs to the true venom lectin family. Homodimer; disulfide-linked. In terms of tissue distribution, expressed by the venom gland.

Its subcellular location is the secreted. Its function is as follows. Galactose-binding protein which recognizes specific carbohydrate structures and agglutinates a variety of animal cells by binding to cell-surface glycoproteins and glycolipids. May be a calcium-dependent lectin. This Trimeresurus stejnegeri (Chinese green tree viper) protein is C-type lectin TsL.